The sequence spans 451 residues: Chromosomal replication initiator protein DnaA (451 aa).

The tract at residues 1–77 (MTENEQIFWN…EVYNAQISVD (77 aa)) is domain I, interacts with DnaA modulators. The tract at residues 77–110 (DYVFEEDLMIEQNQTKINQKPKQQALNSLPTVTS) is domain II. Residues 111–329 (DLNSKYSFEN…GALKDISLGA (219 aa)) form a domain III, AAA+ region region. Residues glycine 155, glycine 157, lysine 158, and threonine 159 each contribute to the ATP site. The domain IV, binds dsDNA stretch occupies residues 330–451 (NFKQIDTITV…EIETIKNKIK (122 aa)).

The protein belongs to the DnaA family. Oligomerizes as a right-handed, spiral filament on DNA at oriC.

It localises to the cytoplasm. Functionally, plays an essential role in the initiation and regulation of chromosomal replication. ATP-DnaA binds to the origin of replication (oriC) to initiate formation of the DNA replication initiation complex once per cell cycle. Binds the DnaA box (a 9 base pair repeat at the origin) and separates the double-stranded (ds)DNA. Forms a right-handed helical filament on oriC DNA; dsDNA binds to the exterior of the filament while single-stranded (ss)DNA is stabiized in the filament's interior. The ATP-DnaA-oriC complex binds and stabilizes one strand of the AT-rich DNA unwinding element (DUE), permitting loading of DNA polymerase. After initiation quickly degrades to an ADP-DnaA complex that is not apt for DNA replication. Binds acidic phospholipids. In Streptococcus pyogenes serotype M49 (strain NZ131), this protein is Chromosomal replication initiator protein DnaA.